A 273-amino-acid polypeptide reads, in one-letter code: Testis-specific serine/threonine-protein kinase 6 (273 aa).

The 256-residue stretch at 12–267 (YKLGRTIGEG…AGQVARNGWL (256 aa)) folds into the Protein kinase domain. ATP-binding positions include 18 to 26 (IGEGSYSKV) and K41. D135 acts as the Proton acceptor in catalysis.

The protein belongs to the protein kinase superfamily. CAMK Ser/Thr protein kinase family. In terms of assembly, microtubule inner protein component of sperm flagellar doublet microtubules. Interacts with HSP90; this interaction stabilizes and activates TSSK6. Interacts with the heat shock proteins HSPCB, HSPA8 and HSPA1A. These interactions appear to be required for TSSK6 kinase activity. Interacts with TSACC; this interaction is direct and recruits TSACC to HSP90, which is essential for kinase activity. The cofactor is Mg(2+). Post-translationally, autophosphorylated. Ubiquitinated; HSP90 activity negatively regulates ubiquitination and degradation. In terms of tissue distribution, expressed in the testis, localized to the heads of elongating spermatids.

The protein resides in the cytoplasm. It is found in the cytoskeleton. The protein localises to the flagellum axoneme. Its subcellular location is the nucleus. It carries out the reaction L-seryl-[protein] + ATP = O-phospho-L-seryl-[protein] + ADP + H(+). It catalyses the reaction L-threonyl-[protein] + ATP = O-phospho-L-threonyl-[protein] + ADP + H(+). Serine/threonine-protein kinase component of the sperm flagellar doublet microtubules. May act as a regulator of sperm motility by mediating phosphorylation of sperm doublet microtubule proteins. Plays a role in DNA condensation during postmeiotic chromatin remodeling and histone-to-protamine transition during spermatogenesis. This Mus musculus (Mouse) protein is Testis-specific serine/threonine-protein kinase 6.